The chain runs to 212 residues: Mediator of RNA polymerase II transcription subunit 20 (212 aa).

It belongs to the Mediator complex subunit 20 family. Component of the Mediator complex, which is composed of MED1, MED4, MED6, MED7, MED8, MED9, MED10, MED11, MED12, MED13, MED13L, MED14, MED15, MED16, MED17, MED18, MED19, MED20, MED21, MED22, MED23, MED24, MED25, MED26, MED27, MED29, MED30, MED31, CCNC, CDK8 and CDC2L6/CDK11. The MED12, MED13, CCNC and CDK8 subunits form a distinct module termed the CDK8 module. Mediator containing the CDK8 module is less active than Mediator lacking this module in supporting transcriptional activation. Individual preparations of the Mediator complex lacking one or more distinct subunits have been variously termed ARC, CRSP, DRIP, PC2, SMCC and TRAP. Interacts with PPARG.

The protein localises to the nucleus. Functionally, component of the Mediator complex, a coactivator involved in the regulated transcription of nearly all RNA polymerase II-dependent genes. Mediator functions as a bridge to convey information from gene-specific regulatory proteins to the basal RNA polymerase II transcription machinery. Mediator is recruited to promoters by direct interactions with regulatory proteins and serves as a scaffold for the assembly of a functional preinitiation complex with RNA polymerase II and the general transcription factors. This chain is Mediator of RNA polymerase II transcription subunit 20 (Med20), found in Mus musculus (Mouse).